Consider the following 307-residue polypeptide: Methionyl-tRNA formyltransferase (307 aa).

(6S)-5,6,7,8-tetrahydrofolate is bound at residue 108–111 (SLLP).

Belongs to the Fmt family.

It catalyses the reaction L-methionyl-tRNA(fMet) + (6R)-10-formyltetrahydrofolate = N-formyl-L-methionyl-tRNA(fMet) + (6S)-5,6,7,8-tetrahydrofolate + H(+). Attaches a formyl group to the free amino group of methionyl-tRNA(fMet). The formyl group appears to play a dual role in the initiator identity of N-formylmethionyl-tRNA by promoting its recognition by IF2 and preventing the misappropriation of this tRNA by the elongation apparatus. The sequence is that of Methionyl-tRNA formyltransferase from Xylella fastidiosa (strain M23).